A 401-amino-acid polypeptide reads, in one-letter code: MASGWDLASTYTPTTPSPQLALAPAQGYLPCMGPRDNSQLRPPEAESLSKTPKRRKKRYLRHDKPPYTYLAMIALVIQAAPFRRLKLAQIIRQVQAVFPFFRDDYEGWKDSIRHNLSSNRCFHKVPKDPAKPQAKGNFWAVDVSLIPAEALRLQNTALCRRWQNRGTHRAFAKDLSPYVLHGQPYQPPSPPPPPREGFSIKSLLGDPGKESTWPQHPGLPGQSTAAQAGTLSKGEEGMGTGPSSSSETPLWPLCSLPGPTIIEGESSQGEVIRPSPVTPDQGSWPLHLLEDSADSRGVPRRGSRASLWGQLPTSYLPIYTPNVVMPLATLPTTSCPQCPSSASPAYWSVGTESQGSQDLLCDLDSLFQGVPPNKSIYDVWVSHPRDLAAPAPGWLLSWYSM.

The segment at 32-57 (MGPRDNSQLRPPEAESLSKTPKRRKK) is disordered. Residues 64 to 163 (KPPYTYLAMI…QNTALCRRWQ (100 aa)) constitute a DNA-binding region (fork-head). Positions 179–251 (VLHGQPYQPP…PSSSSETPLW (73 aa)) are disordered. Over residues 185-195 (YQPPSPPPPPR) the composition is skewed to pro residues. The segment covering 221-230 (GQSTAAQAGT) has biased composition (polar residues). An SMAD-interaction domain (SID) region spans residues 307-390 (LWGQLPTSYL…VSHPRDLAAP (84 aa)). Residues 311–315 (LPTSY) carry the Fast/FoxH1 motif 1 (FM1) motif. Positions 321 to 327 (PNVVMPL) match the Fast/FoxH1 motif 2 (FM2) motif. The SMAD interaction motif (SIM) signature appears at 363-384 (LDSLFQGVPPNKSIYDVWVSHP).

As to quaternary structure, interacts with the MH2 domains of SMAD2 and SMAD3.

The protein resides in the nucleus. Transcriptional activator. Recognizes and binds to the DNA sequence 5'-TGT[GT][GT]ATT-3'. Required for induction of the goosecoid (GSC) promoter by TGF-beta or activin signaling. Forms a transcriptionally active complex containing FOXH1/SMAD2/SMAD4 on a site on the GSC promoter called TARE (TGF-beta/activin response element). This is Forkhead box protein H1 (Foxh1) from Mus musculus (Mouse).